We begin with the raw amino-acid sequence, 508 residues long: Flagellin (508 aa).

The protein belongs to the bacterial flagellin family.

The protein localises to the secreted. It is found in the bacterial flagellum. Flagellin is the subunit protein which polymerizes to form the filaments of bacterial flagella. The protein is Flagellin (fliC) of Salmonella berta.